A 134-amino-acid polypeptide reads, in one-letter code: Profilin-2 (134 aa).

A disulfide bridge connects residues Cys13 and Cys118. The Involved in PIP2 interaction signature appears at 84-100; sequence AVIRGKKGSGGITIKKT. Thr114 carries the phosphothreonine modification.

It belongs to the profilin family. Occurs in many kinds of cells as a complex with monomeric actin in a 1:1 ratio. In terms of processing, phosphorylated by MAP kinases.

The protein resides in the cytoplasm. Its subcellular location is the cytoskeleton. In terms of biological role, binds to actin and affects the structure of the cytoskeleton. At high concentrations, profilin prevents the polymerization of actin, whereas it enhances it at low concentrations. The protein is Profilin-2 of Olea europaea (Common olive).